Here is a 2038-residue protein sequence, read N- to C-terminus: HEAT repeat-containing protein 5A (2038 aa).

2 HEAT repeats span residues glutamate 850–aspartate 887 and leucine 1082–aspartate 1119. A disordered region spans residues arginine 1646–aspartate 1668. At serine 1647 the chain carries Phosphoserine.

Belongs to the HEATR5 family.

The polypeptide is HEAT repeat-containing protein 5A (Heatr5a) (Mus musculus (Mouse)).